Consider the following 542-residue polypeptide: Exopolysaccharide phosphotransferase CpsY (542 aa).

The disordered stretch occupies residues Ser522 to Arg542. The segment covering Gln533 to Arg542 has biased composition (polar residues).

It belongs to the stealth family.

The polypeptide is Exopolysaccharide phosphotransferase CpsY (cpsY) (Mycobacterium leprae (strain TN)).